Consider the following 565-residue polypeptide: Salicyl-AMP ligase / salicyl-S-ArCP synthetase (565 aa).

ATP-binding residues include G214, G330, V352, D436, R451, and K542.

This sequence belongs to the ATP-dependent AMP-binding enzyme family.

The catalysed reaction is salicylate + ATP + H(+) = 2-hydroxybenzoyl-5'-AMP + diphosphate. It carries out the reaction 2-hydroxybenzoyl-5'-AMP + holo-[ACP] = salicyl-[ACP] + AMP + H(+). It participates in siderophore biosynthesis; mycobactin biosynthesis. Its activity is regulated as follows. Inhibited by salicyl-AMS, an acyl-AMP analog. Also inhibited by 5'-O-[(N-acyl)sulfamoyl]adenosines. Its function is as follows. Involved in the initial steps of the mycobactin biosynthetic pathway. Catalyzes the salicylation of the aryl carrier protein (ArCP) domain of MbtB through a two-step reaction. The first step is the ATP-dependent adenylation of salicylate to generate a salicyl-AMP intermediate. The second step is the transfer of this activated salicylate to MbtB to form a salicyl-ArCP domain thioester. The polypeptide is Salicyl-AMP ligase / salicyl-S-ArCP synthetase (Mycobacterium tuberculosis (strain ATCC 25618 / H37Rv)).